Here is a 105-residue protein sequence, read N- to C-terminus: uncharacterized protein (105 aa).

A signal peptide spans 1–19; the sequence is MKLVFIFATAAIMGVVVYG.

This is an uncharacterized protein from Magallana gigas (Pacific oyster).